Here is a 206-residue protein sequence, read N- to C-terminus: Large ribosomal subunit protein uL4 (206 aa).

The protein belongs to the universal ribosomal protein uL4 family. Part of the 50S ribosomal subunit.

In terms of biological role, one of the primary rRNA binding proteins, this protein initially binds near the 5'-end of the 23S rRNA. It is important during the early stages of 50S assembly. It makes multiple contacts with different domains of the 23S rRNA in the assembled 50S subunit and ribosome. Functionally, forms part of the polypeptide exit tunnel. In Bradyrhizobium sp. (strain ORS 278), this protein is Large ribosomal subunit protein uL4.